We begin with the raw amino-acid sequence, 312 residues long: Dehydrogenase/reductase SDR family member 7C (312 aa).

The signal sequence occupies residues 1–18 (MGVMAMLMLPLLLLGISG). Positions 47, 49, 192, 196, and 227 each coordinate NAD(+). Y192 acts as the Proton acceptor in catalysis.

This sequence belongs to the short-chain dehydrogenases/reductases (SDR) family.

Its subcellular location is the sarcoplasmic reticulum membrane. The enzyme catalyses all-trans-retinol + NAD(+) = all-trans-retinal + NADH + H(+). NADH-dependent oxidoreductase which catalyzes the oxidation of all-trans-retinol to all-trans-retinal. Plays a role in the regulation of cardiac and skeletal muscle metabolic functions. Maintains Ca(2+) intracellular homeostasis by repressing Ca(2+) release from the sarcoplasmic reticulum (SR) in myotubes, possibly through local alternations in NAD/NADH or retinol/retinal. Also plays a role in Ca(2+) homeostasis by controlling Ca(2+) overload in the cytosol and the SR in myotubes. Involved in glucose uptake into skeletal muscles and muscle performance by activating PI3K and mTORC2-mediated AKT1 phosphorylation signaling pathways, possibly through the action of its downstream catalytic product all-trans-retinoic acid. This Homo sapiens (Human) protein is Dehydrogenase/reductase SDR family member 7C.